The primary structure comprises 378 residues: Protein RecA (378 aa).

Residue 79–86 coordinates ATP; sequence GPESSGKT.

Belongs to the RecA family.

The protein localises to the cytoplasm. Functionally, can catalyze the hydrolysis of ATP in the presence of single-stranded DNA, the ATP-dependent uptake of single-stranded DNA by duplex DNA, and the ATP-dependent hybridization of homologous single-stranded DNAs. It interacts with LexA causing its activation and leading to its autocatalytic cleavage. The protein is Protein RecA of Streptococcus equi subsp. zooepidemicus (strain H70).